Consider the following 476-residue polypeptide: MCAGYKILILAYLTTEIWMERQYLSQREVDPGAEFTRNHTISEGTRFKRAVFEGQYCRRFGCCADRDDGCVTQFYEADALCYCDKFCERENSDCCPDYKSFCREEKGWPPRTKPWSPEGCHRDGQHYEEGSVIKENCNSCTCSGQQWKCSQHVCLVQPGLIEHVNKGDYGWTAQNYSQFWGMTLEEGFKYRLGTLPPSPLLLSMNEVTASLTKTTDLPEFFIASYKWPGWTHGPLDQKNCAASWAFSTASVAADRIAIQSQGRYTANLSPQNLISCCAKKRHGCNSGSVDRAWWYLRKRGLVSHACYPLFKDQNATNNGCAMASRSDGRGKRHATTPCPNSIEKSNRIYQCSPPYRVSSNETEIMREIMQNGPVQAIMQVHEDFFNYKTGIYRHITSTNEDSEKYRKFRTHAVKLTGWGTLRGAQGQKEKFWIAANSWGKSWGENGYFRILRGVNESDIEKLIIAAWGQLTSADEP.

Asn38 carries N-linked (GlcNAc...) asparagine glycosylation. The region spanning 59–107 is the SMB domain; that stretch reads RFGCCADRDDGCVTQFYEADALCYCDKFCERENSDCCPDYKSFCREEKG. Intrachain disulfides connect Cys63-Cys83 and Cys87-Cys94. N-linked (GlcNAc...) asparagine glycosylation is found at Asn175, Asn314, Asn360, and Asn455.

This sequence belongs to the peptidase C1 family.

Its subcellular location is the secreted. The protein localises to the extracellular space. The protein resides in the extracellular matrix. It is found in the basement membrane. Mediates adhesion of proximal tubule epithelial cells via integrins alpha3-beta1 and alphaV-beta3. This is a non catalytic peptidase C1 family protein. This is Tubulointerstitial nephritis antigen (TINAG) from Bos taurus (Bovine).